A 503-amino-acid polypeptide reads, in one-letter code: ATP synthase subunit alpha (503 aa).

Residue 170–177 coordinates ATP; that stretch reads GDKQTGKT.

Belongs to the ATPase alpha/beta chains family. F-type ATPases have 2 components, CF(1) - the catalytic core - and CF(0) - the membrane proton channel. CF(1) has five subunits: alpha(3), beta(3), gamma(1), delta(1), epsilon(1). CF(0) has three main subunits: a(1), b(2) and c(9-12). The alpha and beta chains form an alternating ring which encloses part of the gamma chain. CF(1) is attached to CF(0) by a central stalk formed by the gamma and epsilon chains, while a peripheral stalk is formed by the delta and b chains.

The protein localises to the cell inner membrane. The enzyme catalyses ATP + H2O + 4 H(+)(in) = ADP + phosphate + 5 H(+)(out). In terms of biological role, produces ATP from ADP in the presence of a proton gradient across the membrane. The alpha chain is a regulatory subunit. The protein is ATP synthase subunit alpha of Helicobacter pylori (strain P12).